A 451-amino-acid chain; its full sequence is Neuraminidase (451 aa).

Topologically, residues 1-6 (MNPNQK) are intravirion. A helical membrane pass occupies residues 7–29 (IITIGSMSLTIATVCFLMQIAIL). Residues 11 to 33 (GSMSLTIATVCFLMQIAILATNV) are involved in apical transport and lipid raft association. Topologically, residues 30-451 (ATNVTLHFRQ…DGANINFMPL (422 aa)) are virion surface. N-linked (GlcNAc...) asparagine; by host glycosylation is found at N32, N48, and N66. The segment at 36-68 (HFRQNEESIPAYNQTTPCKPIIIERNIKYRNWS) is hypervariable stalk region. The head of neuraminidase stretch occupies residues 71 to 451 (QCQITGFAPF…DGANINFMPL (381 aa)). Disulfide bonds link C72–C399, C104–C109, C163–C210, C212–C217, C258–C272, C260–C270, C300–C319, and C403–C429. R98 provides a ligand contact to substrate. N123 and N126 each carry an N-linked (GlcNAc...) asparagine; by host glycan. The active-site Proton donor/acceptor is the D131. R132 contributes to the substrate binding site. N-linked (GlcNAc...) asparagine; by host glycosylation is found at N180 and N214. Residue 256–257 (EE) coordinates substrate. Residue R273 participates in substrate binding. Residues D274, G278, and D306 each coordinate Ca(2+). The interval 307–331 (TPRNDDSSSSSNCRDPNNERGNPGV) is disordered. R353 provides a ligand contact to substrate. An N-linked (GlcNAc...) asparagine; by host glycan is attached at N384. Y388 serves as the catalytic Nucleophile.

This sequence belongs to the glycosyl hydrolase 34 family. Homotetramer. Requires Ca(2+) as cofactor. Post-translationally, N-glycosylated.

The protein localises to the virion membrane. The protein resides in the host apical cell membrane. The enzyme catalyses Hydrolysis of alpha-(2-&gt;3)-, alpha-(2-&gt;6)-, alpha-(2-&gt;8)- glycosidic linkages of terminal sialic acid residues in oligosaccharides, glycoproteins, glycolipids, colominic acid and synthetic substrates.. Its activity is regulated as follows. Inhibited by the neuraminidase inhibitors zanamivir (Relenza) and oseltamivir (Tamiflu). These drugs interfere with the release of progeny virus from infected cells and are effective against all influenza strains. Resistance to neuraminidase inhibitors is quite rare. Catalyzes the removal of terminal sialic acid residues from viral and cellular glycoconjugates. Cleaves off the terminal sialic acids on the glycosylated HA during virus budding to facilitate virus release. Additionally helps virus spread through the circulation by further removing sialic acids from the cell surface. These cleavages prevent self-aggregation and ensure the efficient spread of the progeny virus from cell to cell. Otherwise, infection would be limited to one round of replication. Described as a receptor-destroying enzyme because it cleaves a terminal sialic acid from the cellular receptors. May facilitate viral invasion of the upper airways by cleaving the sialic acid moieties on the mucin of the airway epithelial cells. Likely to plays a role in the budding process through its association with lipid rafts during intracellular transport. May additionally display a raft-association independent effect on budding. Plays a role in the determination of host range restriction on replication and virulence. Sialidase activity in late endosome/lysosome traffic seems to enhance virus replication. This chain is Neuraminidase, found in Aves.